Consider the following 163-residue polypeptide: Inner membrane protein YcdZ (163 aa).

Topologically, residues 1 to 2 (MN) are cytoplasmic. The chain crosses the membrane as a helical span at residues 3-23 (ILLSIAITTGILSGIWGWVAV). A topological domain (periplasmic) is located at residue Ser24. Residues 25 to 45 (LGLLSWAGFLGCTAYFACPQG) form a helical membrane-spanning segment. The Cytoplasmic portion of the chain corresponds to 46–48 (GLK). Residues 49–69 (GLAISAATLLSGVVWAMVIIY) traverse the membrane as a helical segment. Over 70-71 (GS) the chain is Periplasmic. Residues 72-92 (ALAPHLEILGYVITGIVAFLM) form a helical membrane-spanning segment. Over 93 to 98 (CIQAKQ) the chain is Cytoplasmic. Residues 99 to 119 (LLLSFVPGTFIGACATFAGQG) traverse the membrane as a helical segment. Topologically, residues 120 to 122 (DWK) are periplasmic. Residues 123–143 (LVLPSLALGLIFGYAMKNSGL) traverse the membrane as a helical segment. Topologically, residues 144 to 163 (WLAARSAKTAHREQEIKNKA) are cytoplasmic.

It to E.coli YahC.

The protein resides in the cell inner membrane. In Escherichia coli (strain K12), this protein is Inner membrane protein YcdZ (ycdZ).